The sequence spans 139 residues: GPI-anchored protein 53 (139 aa).

The first 17 residues, 1–17 (MKFQLLTLVSIATTTLA), serve as a signal peptide directing secretion. 2 stretches are compositionally biased toward low complexity: residues 57–69 (TITS…TTTT) and 77–101 (TSTT…SSSS). The disordered stretch occupies residues 57–115 (TITSSSSTTTTTTAKKDKKTTSTTSASSTTTTSTKSNSTSPSSSSSKKHKSETASITKT). Asn93 carries an N-linked (GlcNAc...) asparagine glycan. Gly116 carries GPI-anchor amidated glycine lipidation. The propeptide at 117 to 139 (GADSVAAAAAVGGPILAALALLL) is removed in mature form.

The protein resides in the cell membrane. The protein is GPI-anchored protein 53 (PGA53) of Candida albicans (strain SC5314 / ATCC MYA-2876) (Yeast).